The primary structure comprises 851 residues: Envelope glycoprotein gp160 (851 aa).

Residues 1–31 form the signal peptide; it reads MKVMGIQRNCQQWWIWGILGFWMLMICNGMG. The Extracellular segment spans residues 32–672; the sequence is NLWVTVYYGV…ITNWLWYIKI (641 aa). Cys53 and Cys73 are joined by a disulfide. N-linked (GlcNAc...) asparagine; by host glycans are attached at residues Asn87, Asn135, Asn141, Asn153, Asn157, Asn183, and Asn194. Intrachain disulfides connect Cys118/Cys202, Cys125/Cys193, Cys130/Cys154, Cys215/Cys244, and Cys225/Cys236. The segment at 130–153 is V1; it reads CNAIKNNTKVTNNSINSANDEMKN. The tract at residues 154-193 is V2; that stretch reads CSFNITTELRDKKRKAYALFYKLDIVPLNNGSTDYRLINC. N-linked (GlcNAc...) asparagine; by host glycosylation is found at Asn238, Asn259, Asn273, Asn286, Asn298, Asn328, Asn335, and Asn351. Residues 293 to 326 are V3; that stretch reads CTRPSNNTRESIRIGPGQTFYATGDIIGDIRQAH. Cys293 and Cys327 are disulfide-bonded. The CD4-binding loop stretch occupies residues 359–369; that stretch reads SSGGDLEITTH. Cystine bridges form between Cys373/Cys433 and Cys380/Cys406. Residues 380-406 form a V4 region; sequence CNTSNLFNSTKLELFNSSTNLNITLQC. 5 N-linked (GlcNAc...) asparagine; by host glycosylation sites follow: Asn381, Asn387, Asn395, Asn401, and Asn436. 2 V5 regions span residues 449–460 and 451–460; these read EPHSTKEIFRPE and HSTKEIFRPE. The interval 501-520 is fusion peptide; it reads AALGALFLGFLGAAGSTMGA. Positions 562–580 are immunosuppression; that stretch reads KQLQTRVLAIERHLRDQQL. Cys586 and Cys592 are disulfide-bonded. Residues Asn599, Asn604, Asn613, Asn625, and Asn662 are each glycosylated (N-linked (GlcNAc...) asparagine; by host). A coiled-coil region spans residues 621 to 655; that stretch reads REISNYTDIIYNLLEVSQNQQDKNEKDLLALDKWE. The segment at 650 to 671 is MPER; binding to GalCer; that stretch reads ALDKWENLWNWFNITNWLWYIK. The helical transmembrane segment at 673–693 threads the bilayer; that stretch reads FIMIVGGVIGLRIIFAVLSIV. Residues 694–851 lie on the Cytoplasmic side of the membrane; the sequence is NRVRQGYSPL…IRQGLEAALQ (158 aa). A YXXL motif; contains endocytosis signal motif is present at residues 700–703; that stretch reads YSPL. The S-palmitoyl cysteine; by host moiety is linked to residue Cys752.

This sequence belongs to the HIV-1 env protein family. As to quaternary structure, the mature envelope protein (Env) consists of a homotrimer of non-covalently associated gp120-gp41 heterodimers. The resulting complex protrudes from the virus surface as a spike. There seems to be as few as 10 spikes on the average virion. Interacts with host CD4, CCR5 and CXCR4. Gp120 also interacts with the C-type lectins CD209/DC-SIGN and CLEC4M/DC-SIGNR (collectively referred to as DC-SIGN(R)). Gp120 and gp41 interact with GalCer. Gp120 interacts with host ITGA4/ITGB7 complex; on CD4+ T-cells, this interaction results in rapid activation of integrin ITGAL/LFA-1, which facilitates efficient cell-to-cell spreading of HIV-1. Gp120 interacts with cell-associated heparan sulfate; this interaction increases virus infectivity on permissive cells and may be involved in infection of CD4- cells. In terms of assembly, the mature envelope protein (Env) consists of a homotrimer of non-covalently associated gp120-gp41 heterodimers. The resulting complex protrudes from the virus surface as a spike. There seems to be as few as 10 spikes on the average virion. In terms of processing, highly glycosylated by host. The high number of glycan on the protein is reffered to as 'glycan shield' because it contributes to hide protein sequence from adaptive immune system. Post-translationally, palmitoylation of the transmembrane protein and of Env polyprotein (prior to its proteolytic cleavage) is essential for their association with host cell membrane lipid rafts. Palmitoylation is therefore required for envelope trafficking to classical lipid rafts, but not for viral replication. Specific enzymatic cleavages in vivo yield mature proteins. Envelope glycoproteins are synthesized as an inactive precursor that is heavily N-glycosylated and processed likely by host cell furin in the Golgi to yield the mature SU and TM proteins. The cleavage site between SU and TM requires the minimal sequence [KR]-X-[KR]-R. About 2 of the 9 disulfide bonds of gp41 are reduced by P4HB/PDI, following binding to CD4 receptor.

It localises to the virion membrane. Its subcellular location is the host cell membrane. It is found in the host endosome membrane. Its function is as follows. Oligomerizes in the host endoplasmic reticulum into predominantly trimers. In a second time, gp160 transits in the host Golgi, where glycosylation is completed. The precursor is then proteolytically cleaved in the trans-Golgi and thereby activated by cellular furin or furin-like proteases to produce gp120 and gp41. Attaches the virus to the host lymphoid cell by binding to the primary receptor CD4. This interaction induces a structural rearrangement creating a high affinity binding site for a chemokine coreceptor like CXCR4 and/or CCR5. Acts as a ligand for CD209/DC-SIGN and CLEC4M/DC-SIGNR, which are respectively found on dendritic cells (DCs), and on endothelial cells of liver sinusoids and lymph node sinuses. These interactions allow capture of viral particles at mucosal surfaces by these cells and subsequent transmission to permissive cells. HIV subverts the migration properties of dendritic cells to gain access to CD4+ T-cells in lymph nodes. Virus transmission to permissive T-cells occurs either in trans (without DCs infection, through viral capture and transmission), or in cis (following DCs productive infection, through the usual CD4-gp120 interaction), thereby inducing a robust infection. In trans infection, bound virions remain infectious over days and it is proposed that they are not degraded, but protected in non-lysosomal acidic organelles within the DCs close to the cell membrane thus contributing to the viral infectious potential during DCs' migration from the periphery to the lymphoid tissues. On arrival at lymphoid tissues, intact virions recycle back to DCs' cell surface allowing virus transmission to CD4+ T-cells. Functionally, acts as a class I viral fusion protein. Under the current model, the protein has at least 3 conformational states: pre-fusion native state, pre-hairpin intermediate state, and post-fusion hairpin state. During fusion of viral and target intracellular membranes, the coiled coil regions (heptad repeats) assume a trimer-of-hairpins structure, positioning the fusion peptide in close proximity to the C-terminal region of the ectodomain. The formation of this structure appears to drive apposition and subsequent fusion of viral and target cell membranes. Complete fusion occurs in host cell endosomes and is dynamin-dependent, however some lipid transfer might occur at the plasma membrane. The virus undergoes clathrin-dependent internalization long before endosomal fusion, thus minimizing the surface exposure of conserved viral epitopes during fusion and reducing the efficacy of inhibitors targeting these epitopes. Membranes fusion leads to delivery of the nucleocapsid into the cytoplasm. The polypeptide is Envelope glycoprotein gp160 (Homo sapiens (Human)).